The following is a 240-amino-acid chain: Ribonuclease HII (240 aa).

The RNase H type-2 domain maps to 31–222 (RLIAGVDEAG…VRRALGLETA (192 aa)). Residues Asp37, Glu38, and Asp130 each contribute to the a divalent metal cation site.

The protein belongs to the RNase HII family. It depends on Mn(2+) as a cofactor. Requires Mg(2+) as cofactor.

Its subcellular location is the cytoplasm. It catalyses the reaction Endonucleolytic cleavage to 5'-phosphomonoester.. In terms of biological role, endonuclease that specifically degrades the RNA of RNA-DNA hybrids. The protein is Ribonuclease HII of Xanthomonas campestris pv. campestris (strain B100).